Consider the following 1555-residue polypeptide: Probable serine/threonine-protein kinase DDB_G0276181 (1555 aa).

Disordered regions lie at residues 1–54 (MTSV…NNSF), 138–208 (IIQQ…NSKL), 342–452 (KLKK…DSPF), 486–508 (TTTT…IKPL), and 781–850 (NNIN…NQNT). Low complexity-rich tracts occupy residues 14 to 53 (NNSG…NNNS), 138 to 205 (IIQQ…NNNN), 359 to 378 (SNIA…KING), and 395 to 431 (NNSQ…SKKP). The PH domain maps to 58-238 (QVLHTGYLTK…WIEMIKLAIS (181 aa)). Over residues 437-452 (RNISTSDNGSGTDSPF) the composition is skewed to polar residues. 2 stretches are compositionally biased toward low complexity: residues 486–504 (TTTT…TNTN) and 781–832 (NNIN…NNNN). A compositionally biased stretch (polar residues) spans 833-850 (GSGLLSSSPLITISNQNT). Residues 986 to 1309 (VVLHERLGTG…TIIHSISKMI (324 aa)) form the Protein kinase domain. An ATP-binding site is contributed by 992–1000 (LGTGATGDI). Residues 1012 to 1031 (RHISNQDSSGSNSSGSGSGH) are disordered. ATP is bound at residue Lys-1061. Catalysis depends on Asp-1156, which acts as the Proton acceptor. A compositionally biased stretch (low complexity) spans 1340 to 1376 (VQNNNNNSNNNNNNNNNNNNNNSNSNLNNCNNSSPNL). Disordered stretches follow at residues 1340–1383 (VQNN…SANN) and 1457–1480 (KKSS…GSSR).

The protein belongs to the protein kinase superfamily. TKL Ser/Thr protein kinase family.

It catalyses the reaction L-seryl-[protein] + ATP = O-phospho-L-seryl-[protein] + ADP + H(+). The catalysed reaction is L-threonyl-[protein] + ATP = O-phospho-L-threonyl-[protein] + ADP + H(+). This chain is Probable serine/threonine-protein kinase DDB_G0276181, found in Dictyostelium discoideum (Social amoeba).